The sequence spans 282 residues: Elongation factor Ts (282 aa).

Residues T79–V82 form an involved in Mg(2+) ion dislocation from EF-Tu region.

Belongs to the EF-Ts family.

It is found in the cytoplasm. Functionally, associates with the EF-Tu.GDP complex and induces the exchange of GDP to GTP. It remains bound to the aminoacyl-tRNA.EF-Tu.GTP complex up to the GTP hydrolysis stage on the ribosome. This Shewanella piezotolerans (strain WP3 / JCM 13877) protein is Elongation factor Ts.